The primary structure comprises 369 residues: D-glucosaminate-6-phosphate ammonia lyase (369 aa).

At Lys213 the chain carries N6-(pyridoxal phosphate)lysine.

This sequence belongs to the SelA family. Pyridoxal 5'-phosphate serves as cofactor.

It catalyses the reaction 2-amino-2-deoxy-D-gluconate 6-phosphate = 2-dehydro-3-deoxy-6-phospho-D-gluconate + NH4(+). Its function is as follows. Involved in the catabolism of D-glucosaminate. Catalyzes the conversion of D-glucosaminate 6-phosphate to yield keto-3-deoxygluconate 6-phosphate (KDGP). The sequence is that of D-glucosaminate-6-phosphate ammonia lyase from Salmonella typhimurium (strain 14028s / SGSC 2262).